Here is a 222-residue protein sequence, read N- to C-terminus: Thiol:disulfide interchange protein DsbL (222 aa).

The first 27 residues, Met1–Ala27, serve as a signal peptide directing secretion. The region spanning Phe28–Thr221 is the Thioredoxin domain. An intrachain disulfide couples Cys56 to Cys59.

The protein belongs to the thioredoxin family. DsbL subfamily. As to quaternary structure, interacts with DsbI.

It localises to the periplasm. Its function is as follows. Involved in disulfide-bond formation. Acts by transferring its disulfide bond to other proteins. Part of a redox system composed of DsbI and DsbL that mediates formation of an essential disulfide bond in AssT. The polypeptide is Thiol:disulfide interchange protein DsbL (Lelliottia amnigena (Enterobacter amnigenus)).